A 453-amino-acid polypeptide reads, in one-letter code: Chromosomal replication initiator protein DnaA (453 aa).

Residues 1–75 (MSENMEELWS…SLKKISGKQL (75 aa)) form a domain I, interacts with DnaA modulators region. The tract at residues 75–114 (LKIKFLLPGEKIKMEEQNNENEEKPESTSKKSSQGSEHTT) is domain II. The segment covering 87-103 (KMEEQNNENEEKPESTS) has biased composition (basic and acidic residues). The tract at residues 87 to 112 (KMEEQNNENEEKPESTSKKSSQGSEH) is disordered. A domain III, AAA+ region region spans residues 115–331 (WLNPKYTFDT…GGLIRVIAYS (217 aa)). Positions 159, 161, 162, and 163 each coordinate ATP. The domain IV, binds dsDNA stretch occupies residues 332 to 453 (SMANKKITKE…DEIKNLLHGD (122 aa)).

It belongs to the DnaA family. As to quaternary structure, oligomerizes as a right-handed, spiral filament on DNA at oriC.

It localises to the cytoplasm. In terms of biological role, plays an essential role in the initiation and regulation of chromosomal replication. ATP-DnaA binds to the origin of replication (oriC) to initiate formation of the DNA replication initiation complex once per cell cycle. Binds the DnaA box (a 9 base pair repeat at the origin) and separates the double-stranded (ds)DNA. Forms a right-handed helical filament on oriC DNA; dsDNA binds to the exterior of the filament while single-stranded (ss)DNA is stabiized in the filament's interior. The ATP-DnaA-oriC complex binds and stabilizes one strand of the AT-rich DNA unwinding element (DUE), permitting loading of DNA polymerase. After initiation quickly degrades to an ADP-DnaA complex that is not apt for DNA replication. Binds acidic phospholipids. In Natranaerobius thermophilus (strain ATCC BAA-1301 / DSM 18059 / JW/NM-WN-LF), this protein is Chromosomal replication initiator protein DnaA.